The sequence spans 299 residues: ATP phosphoribosyltransferase (299 aa).

It belongs to the ATP phosphoribosyltransferase family. Long subfamily. As to quaternary structure, equilibrium between an active dimeric form, an inactive hexameric form and higher aggregates. Interconversion between the various forms is largely reversible and is influenced by the natural substrates and inhibitors of the enzyme. Mg(2+) is required as a cofactor.

Its subcellular location is the cytoplasm. It catalyses the reaction 1-(5-phospho-beta-D-ribosyl)-ATP + diphosphate = 5-phospho-alpha-D-ribose 1-diphosphate + ATP. Its pathway is amino-acid biosynthesis; L-histidine biosynthesis; L-histidine from 5-phospho-alpha-D-ribose 1-diphosphate: step 1/9. Its activity is regulated as follows. Feedback inhibited by histidine. In terms of biological role, catalyzes the condensation of ATP and 5-phosphoribose 1-diphosphate to form N'-(5'-phosphoribosyl)-ATP (PR-ATP). Has a crucial role in the pathway because the rate of histidine biosynthesis seems to be controlled primarily by regulation of HisG enzymatic activity. The chain is ATP phosphoribosyltransferase from Escherichia fergusonii (strain ATCC 35469 / DSM 13698 / CCUG 18766 / IAM 14443 / JCM 21226 / LMG 7866 / NBRC 102419 / NCTC 12128 / CDC 0568-73).